The following is a 464-amino-acid chain: Serine--tRNA synthetase-like protein Slimp (464 aa).

Belongs to the class-II aminoacyl-tRNA synthetase family. Type-1 seryl-tRNA synthetase subfamily.

The protein localises to the mitochondrion. Essential protein which may play a role in mitochondrial morphogenesis and function. Has transfer RNA (tRNA)-binding activity and can bind tRNA(Ser) but does not have serine--tRNA ligase activity and does not bind ATP. The chain is Serine--tRNA synthetase-like protein Slimp from Drosophila melanogaster (Fruit fly).